The primary structure comprises 283 residues: Putative S-adenosyl-L-methionine-dependent methyltransferase SAV_474/SAV474 (283 aa).

Residues Asp121 and 150-151 (DL) contribute to the S-adenosyl-L-methionine site. Residues 258–283 (AAYGRPISTPPQREERPGGLISAVRR) are disordered.

Belongs to the UPF0677 family.

Exhibits S-adenosyl-L-methionine-dependent methyltransferase activity. The polypeptide is Putative S-adenosyl-L-methionine-dependent methyltransferase SAV_474/SAV474 (Streptomyces avermitilis (strain ATCC 31267 / DSM 46492 / JCM 5070 / NBRC 14893 / NCIMB 12804 / NRRL 8165 / MA-4680)).